Reading from the N-terminus, the 149-residue chain is MMLPQGYTFRKLKLTDYDNQYLETLKVLTTVGEISKEDFTELYNHWSSLPSIYHPYVITNASGIVVATGMLFVEKKLIHECGKVGHIEDISVAKSEQGKKLGYYLVTSLTKVAQENDCYKVILDCSPENVGFYEKCGYKDGGVEMVCRF.

The 143-residue stretch at 7–149 (YTFRKLKLTD…DGGVEMVCRF (143 aa)) folds into the N-acetyltransferase domain. Substrate is bound by residues T29, 76 to 79 (KLIH), and 88 to 90 (EDI). Acetyl-CoA contacts are provided by residues 90–92 (ISV) and 98–103 (GKKLGY). Residues 119–120 (YK) and D124 each bind substrate. 133 to 135 (YEK) serves as a coordination point for acetyl-CoA. Residue R148 participates in substrate binding.

This sequence belongs to the acetyltransferase family. GNA1 subfamily.

The catalysed reaction is D-glucosamine 6-phosphate + acetyl-CoA = N-acetyl-D-glucosamine 6-phosphate + CoA + H(+). Its pathway is nucleotide-sugar biosynthesis; UDP-N-acetyl-alpha-D-glucosamine biosynthesis; N-acetyl-alpha-D-glucosamine 1-phosphate from alpha-D-glucosamine 6-phosphate (route I): step 1/2. This is Glucosamine 6-phosphate N-acetyltransferase (GNA1) from Candida albicans (Yeast).